The primary structure comprises 515 residues: Histidine ammonia-lyase (515 aa).

The 5-imidazolinone (Ala-Gly) cross-link spans 145-147; that stretch reads ASG. 2,3-didehydroalanine (Ser) is present on serine 146.

It belongs to the PAL/histidase family. In terms of processing, contains an active site 4-methylidene-imidazol-5-one (MIO), which is formed autocatalytically by cyclization and dehydration of residues Ala-Ser-Gly.

The protein resides in the cytoplasm. It catalyses the reaction L-histidine = trans-urocanate + NH4(+). It participates in amino-acid degradation; L-histidine degradation into L-glutamate; N-formimidoyl-L-glutamate from L-histidine: step 1/3. The sequence is that of Histidine ammonia-lyase from Gluconobacter oxydans (strain 621H) (Gluconobacter suboxydans).